Here is a 96-residue protein sequence, read N- to C-terminus: UPF0235 protein PC1_3453 (96 aa).

It belongs to the UPF0235 family.

The chain is UPF0235 protein PC1_3453 from Pectobacterium carotovorum subsp. carotovorum (strain PC1).